We begin with the raw amino-acid sequence, 375 residues long: Filamin-binding LIM protein 1 (375 aa).

The filamin-binding stretch occupies residues methionine 1–asparagine 69. Residues alanine 40–proline 176 are disordered. Residues lysine 60–glycine 83 are compositionally biased toward polar residues. Composition is skewed to pro residues over residues leucine 98 to alanine 107 and leucine 133 to alanine 144. LIM zinc-binding domains are found at residues aspartate 183–lysine 244, cysteine 245–alanine 302, and proline 303–alanine 372. An FERMT2-binding region spans residues isoleucine 278–cysteine 375.

Interacts with FERMT2, FLNA, FLNB and FLNC. Interacts with NKX2-5.

The protein resides in the cell junction. It is found in the focal adhesion. Its subcellular location is the cytoplasm. It localises to the cytoskeleton. The protein localises to the stress fiber. In terms of biological role, serves as an anchoring site for cell-ECM adhesion proteins and filamin-containing actin filaments. Is implicated in cell shape modulation (spreading) and motility. May participate in the regulation of filamin-mediated cross-linking and stabilization of actin filaments. May also regulate the assembly of filamin-containing signaling complexes that control actin assembly. Promotes dissociation of FLNA from ITGB3 and ITGB7. Promotes activation of integrins and regulates integrin-mediated cell-cell adhesion. The protein is Filamin-binding LIM protein 1 (Fblim1) of Mus musculus (Mouse).